A 228-amino-acid polypeptide reads, in one-letter code: DNA mismatch repair protein MutH (228 aa).

Belongs to the MutH family.

It is found in the cytoplasm. Its function is as follows. Sequence-specific endonuclease that cleaves unmethylated GATC sequences. It is involved in DNA mismatch repair. The protein is DNA mismatch repair protein MutH of Serratia proteamaculans (strain 568).